Here is a 391-residue protein sequence, read N- to C-terminus: Casein kinase II subunit alpha (391 aa).

The interaction with beta subunit stretch occupies residues 36 to 41 (QDDYQL). A Protein kinase domain is found at 39-324 (YQLVRKLGRG…AREAMEHPYF (286 aa)). ATP is bound by residues 45-53 (LGRGKYSEV) and Lys-68. The active-site Proton acceptor is Asp-156. Thr-344 and Thr-360 each carry phosphothreonine; by CDK1. Ser-362 and Ser-370 each carry phosphoserine; by CDK1.

This sequence belongs to the protein kinase superfamily. Ser/Thr protein kinase family. CK2 subfamily. Heterotetramer composed of two catalytic subunits (alpha chain and/or alpha' chain) and two regulatory subunits (beta chains). The tetramer can exist as a combination of 2 alpha/2 beta, 2 alpha'/2 beta or 1 alpha/1 alpha'/2 beta subunits. Also part of a CK2-SPT16-SSRP1 complex composed of SSRP1, SUPT16H, CSNK2A1, CSNK2A2 and CSNK2B, which forms following UV irradiation. Interacts with RNPS1. Interacts with SNAI1. Interacts with PML. Interacts with CCAR2. Interacts with HIRIP3. Post-translationally, phosphorylated at Thr-344, Thr-360, Ser-362 and Ser-370 by CDK1 in prophase and metaphase and dephosphorylated during anaphase. Phosphorylation does not directly affect casein kinase 2 activity, but may contribute to its regulation by forming binding sites for interacting proteins and/or targeting it to different compartments.

It localises to the nucleus. The enzyme catalyses L-seryl-[protein] + ATP = O-phospho-L-seryl-[protein] + ADP + H(+). It carries out the reaction L-threonyl-[protein] + ATP = O-phospho-L-threonyl-[protein] + ADP + H(+). Constitutively active protein kinase whose activity is not directly affected by phosphorylation. Seems to be regulated by level of expression and localization. In terms of biological role, catalytic subunit of a constitutively active serine/threonine-protein kinase complex that phosphorylates a large number of substrates containing acidic residues C-terminal to the phosphorylated serine or threonine. Regulates numerous cellular processes, such as cell cycle progression, apoptosis and transcription, as well as viral infection. May act as a regulatory node which integrates and coordinates numerous signals leading to an appropriate cellular response. During mitosis, functions as a component of the p53/TP53-dependent spindle assembly checkpoint (SAC) that maintains cyclin-B-CDK1 activity and G2 arrest in response to spindle damage. Also required for p53/TP53-mediated apoptosis, phosphorylating 'Ser-392' of p53/TP53 following UV irradiation. Phosphorylates a number of DNA repair proteins in response to DNA damage, such as MDC1, MRE11, RAD9A, RAD51 and HTATSF1, promoting their recruitment to DNA damage sites. Can also negatively regulate apoptosis. Phosphorylates the caspases CASP9 and CASP2 and the apoptotic regulator NOL3. Phosphorylation protects CASP9 from cleavage and activation by CASP8, and inhibits the dimerization of CASP2 and activation of CASP8. Phosphorylates YY1, protecting YY1 from cleavage by CASP7 during apoptosis. Regulates transcription by direct phosphorylation of RNA polymerases I, II, III and IV. Also phosphorylates and regulates numerous transcription factors including NF-kappa-B, STAT1, CREB1, IRF1, IRF2, ATF1, ATF4, SRF, MAX, JUN, FOS, MYC and MYB. Phosphorylates Hsp90 and its co-chaperones FKBP4 and CDC37, which is essential for chaperone function. Mediates sequential phosphorylation of FNIP1, promoting its gradual interaction with Hsp90, leading to activate both kinase and non-kinase client proteins of Hsp90. Regulates Wnt signaling by phosphorylating CTNNB1 and the transcription factor LEF1. Acts as an ectokinase that phosphorylates several extracellular proteins. Phosphorylates PML at 'Ser-565' and primes it for ubiquitin-mediated degradation. Plays an important role in the circadian clock function by phosphorylating BMAL1 at 'Ser-90' which is pivotal for its interaction with CLOCK and which controls CLOCK nuclear entry. Phosphorylates FMR1, promoting FMR1-dependent formation of a membraneless compartment. May phosphorylate histone H2A on 'Ser-1'. The sequence is that of Casein kinase II subunit alpha (CSNK2A1) from Oryctolagus cuniculus (Rabbit).